The sequence spans 802 residues: E3 ubiquitin-protein ligase UHRF2 (802 aa).

The Ubiquitin-like domain occupies 1 to 78; sequence MWIQVRTIDG…IQLLVRPDPD (78 aa). Disordered regions lie at residues 80-116 and 153-197; these read LPGTSTQIEAKPCSNSPPKVKKAPRVGPSNQPSTSAR and RASD…STSN. 3 stretches are compositionally biased toward polar residues: residues 82–96, 153–177, and 188–197; these read GTSTQIEAKPCSNSP, RASDGQSRGKTPLKNGSSCKRTNGN, and KLDSVPSTSN. Positions 117 to 311 are required for interaction with histone H3; the sequence is ARLIDPGFGI…VDEIFKIERP (195 aa). The segment at 194–288 is interaction with PCNP; it reads STSNSDCVAA…KELRVKIFLG (95 aa). A PHD-type zinc finger spans residues 344 to 395; sequence SCSCRVCGGKHEPNMQLLCDECNVAYHIYCLNPPLDKVPEEEYWYCPSCKTD. Residues 414 to 644 form a methyl-CpG binding and interaction with HDAC1 region; that stretch reads KMPSASTESR…LQYPAGYPSD (231 aa). The YDG domain occupies 448–612; that stretch reads GPIPGIPVGS…FLVWRYLLRR (165 aa). The segment at 640 to 674 is disordered; that stretch reads GYPSDKEGKKPKGQSKKQPSGTTKRPISDDDCPSA. Ser667 bears the Phosphoserine mark. An RING-type zinc finger spans residues 733–772; sequence CVCCQELVYQPVTTECFHNVCKDCLQRSFKAQVFSCPACR.

In terms of assembly, homodimer; disulfide-linked. Binds methylated CpG containing oligonucleotides. Interacts with H3; the interaction has a preference for the 'Lys-9' trimethylated form of H3 (H3K9me3). Interacts with PCNP. Interacts with HDAC1. Interacts directly with CCNE1; the interaction ubiquitinates CCNE1 and appears independent of CCNE1 phosphorylation. Interacts with CCND1; the interaction ubiquitinates CCND1 and appears independent of CCND1 phosphorylation. Interacts with p53/TP53 and RB1. Interacts with UBE2I. Interacts with ZNF618. Interacts with UHRF1. Interacts with FANCD2. Interacts with ATR. Interacts with PCNA. In terms of processing, may be autoubiquitinated; which may lead to proteasomal degradation. Phosphorylated. Phosphorylation may be mediated by CDK2. Post-translationally, autosumoylated.

The protein localises to the nucleus. It localises to the chromosome. The enzyme catalyses S-ubiquitinyl-[E2 ubiquitin-conjugating enzyme]-L-cysteine + [acceptor protein]-L-lysine = [E2 ubiquitin-conjugating enzyme]-L-cysteine + N(6)-ubiquitinyl-[acceptor protein]-L-lysine.. It functions in the pathway protein modification; protein ubiquitination. E3 ligase activity is robustly activated by 5-hydroxymethylcytosine. In terms of biological role, E3 ubiquitin ligase that plays important roles in DNA methylation, histone modifications, cell cycle and DNA repair. Acts as a specific reader for 5-hydroxymethylcytosine (5hmC) and thereby recruits various substrates to these sites to ubiquitinate them. This activity also allows the maintenance of 5mC levels at specific genomic loci and regulates neuron-related gene expression. Participates in cell cycle regulation by ubiquitinating cyclins CCND1 and CCNE1 and thereby inducing G1 arrest. Also ubiquitinates PCNP leading to its degradation by the proteasome. Plays an active role in DNA damage repair by ubiquitinating p21/CDKN1A leading to its proteasomal degradation. Also promotes DNA repair by acting as an interstrand cross-links (ICLs) sensor. Mechanistically, cooperates with UHRF1 to ensure recruitment of FANCD2 to ICLs, leading to FANCD2 monoubiquitination and subsequent activation. Contributes to UV-induced DNA damage response by physically interacting with ATR in response to irradiation, thereby promoting ATR activation. The protein is E3 ubiquitin-protein ligase UHRF2 (UHRF2) of Homo sapiens (Human).